The following is a 306-amino-acid chain: Serine/threonine-protein phosphatase PP-X homolog 4 (306 aa).

Mn(2+) contacts are provided by D53, H55, D81, and N113. H114 functions as the Proton donor in the catalytic mechanism. Mn(2+) is bound by residues H163 and H237.

It belongs to the PPP phosphatase family. PP-4 (PP-X) subfamily. Mn(2+) serves as cofactor.

The catalysed reaction is O-phospho-L-seryl-[protein] + H2O = L-seryl-[protein] + phosphate. The enzyme catalyses O-phospho-L-threonyl-[protein] + H2O = L-threonyl-[protein] + phosphate. The protein is Serine/threonine-protein phosphatase PP-X homolog 4 (Ppx4) of Paramecium tetraurelia.